The chain runs to 364 residues: MEPSASCLPGFFMVCILLKITVLTQVMSLDIQINTQIPDTEEGVLVECTAESLFPPAEMTWRDSKGNIIPPSSTFDSQDRAGLLCLKSTILLKNRTEGPITCSIYNKTTNQEKRRSIILSDVLFRPQYMSLMSNNLLYLGIYLIFILFLNFLKGILFCLTKRLVHFRKRMIKIKKVWSNKTRACCPLIWEFLEIVLFIAFLPLYLMFRIRVFTLDEAHILYNNWLWKVCKTLIAMMILFTVLILFLLWTLNRYGKMPCLSSMNIDVSTHDAEQNSSKSAKFQENYDVAGQMILETYEETIFCQHQESCEEYNYDPLLLSSLDALGTCEDEKFSQHQESFEEDEDLQSFSDFKIELYSKLGNLTH.

An N-terminal signal peptide occupies residues Met-1–Ser-28. Positions Leu-29 to Ile-118 constitute an Ig-like V-type domain. Residues Leu-29 to Tyr-138 lie on the Extracellular side of the membrane. Cys-48 and Cys-102 form a disulfide bridge. A helical transmembrane segment spans residues Leu-139–Leu-159. Residues Thr-160–Pro-186 lie on the Cytoplasmic side of the membrane. A helical membrane pass occupies residues Leu-187–Phe-207. The Extracellular portion of the chain corresponds to Arg-208–Lys-230. A helical transmembrane segment spans residues Thr-231–Asn-251. Residues Arg-252–His-364 lie on the Cytoplasmic side of the membrane.

The protein belongs to the SKINT family. In terms of tissue distribution, expressed in skin and thymus.

The protein resides in the membrane. In terms of biological role, may act by engaging a cell surface molecule on immature T-cells in the embryonic thymus. The protein is Selection and upkeep of intraepithelial T-cells protein 11 (Skint11) of Mus musculus (Mouse).